A 189-amino-acid polypeptide reads, in one-letter code: Large ribosomal subunit protein bL9 (189 aa).

It belongs to the bacterial ribosomal protein bL9 family.

In terms of biological role, binds to the 23S rRNA. The sequence is that of Large ribosomal subunit protein bL9 from Brucella ovis (strain ATCC 25840 / 63/290 / NCTC 10512).